A 457-amino-acid polypeptide reads, in one-letter code: Glutamate--tRNA ligase 1 (457 aa).

The 'HIGH' region signature appears at 9–19 (PSPTGYIHIGN). The 'KMSKS' region motif lies at 250 to 254 (GLSKR). ATP is bound at residue lysine 253.

It belongs to the class-I aminoacyl-tRNA synthetase family. Glutamate--tRNA ligase type 1 subfamily. In terms of assembly, monomer.

The protein localises to the cytoplasm. It catalyses the reaction tRNA(Glu) + L-glutamate + ATP = L-glutamyl-tRNA(Glu) + AMP + diphosphate. In terms of biological role, catalyzes the attachment of glutamate to tRNA(Glu) in a two-step reaction: glutamate is first activated by ATP to form Glu-AMP and then transferred to the acceptor end of tRNA(Glu). This chain is Glutamate--tRNA ligase 1, found in Brucella ovis (strain ATCC 25840 / 63/290 / NCTC 10512).